We begin with the raw amino-acid sequence, 294 residues long: Aquaporin-B (294 aa).

The segment at 1–31 is disordered; the sequence is MSLKRSDDYQDLEEGIAMEDGGNIKDEEEKP. The Cytoplasmic segment spans residues 1–42; that stretch reads MSLKRSDDYQDLEEGIAMEDGGNIKDEEEKPLDPIEEQNKKR. The segment covering 22 to 31 has biased composition (basic and acidic residues); that stretch reads GNIKDEEEKP. Residues 43-63 form a helical membrane-spanning segment; it reads WVLIRAVLGELLCTFLFVYVL. The Extracellular portion of the chain corresponds to 64–79; it reads CATSANFIRLGSPPNP. Residue S75 is glycosylated (O-linked (GalNAc...) serine). Residues 80 to 100 traverse the membrane as a helical segment; the sequence is VVGGLSTGFAAVALIYSFADV. The Cytoplasmic segment spans residues 101–123; the sequence is SGAHFNPAVTFATCVTRKTSITK. The NPA 1 signature appears at 106-108; it reads NPA. A helical transmembrane segment spans residues 124–144; the sequence is GLMYVGAQLVGSVLASLILLA. The Extracellular segment spans residues 145-172; sequence TFPGNFPGDKNAASAVAIAPSTDANIGN. Residues 173 to 193 traverse the membrane as a helical segment; sequence AFLTELVLTFILVYVIFAVAF. At 194-224 the chain is on the cytoplasmic side; the sequence is DTVDNSVKTKVVGKSSSNNLTIYTTSGQTKA. A required for water permeability region spans residues 208–219; sequence SSSNNLTIYTTS. A helical transmembrane segment spans residues 225-245; that stretch reads GFAPIAIGFTLGFLCFLGGSV. Topologically, residues 246-268 are extracellular; it reads SGGAFNPARVFGTALVGNNWTRH. An NPA 2 motif is present at residues 251 to 253; the sequence is NPA. The helical transmembrane segment at 269–289 threads the bilayer; it reads WMYWIADFLGAGLAGFAQKFF. Topologically, residues 290–294 are cytoplasmic; sequence SSTHK.

The protein belongs to the MIP/aquaporin (TC 1.A.8) family. Glycosylated and non-glycosylated forms exist throughout all developmental stages.

It localises to the cell membrane. It is found in the cytoplasmic vesicle. In terms of biological role, putatively gated water-specific channel, requiring a cysteine residue within the channel. Impermeable to water, glycerol and urea when expressed in Xenopus oocytes. Not regulated by pH; channels remain impermeable to water at pH 7.4 and 5.2. The sequence is that of Aquaporin-B from Dictyostelium discoideum (Social amoeba).